Consider the following 357-residue polypeptide: 3-isopropylmalate dehydrogenase (357 aa).

76–89 (GPQWDTIDPALRPE) serves as a coordination point for NAD(+). Substrate is bound by residues R96, R106, R134, and D224. Mg(2+) contacts are provided by D224, D248, and D252. 282–294 (GSAPDIAGQGIAN) serves as a coordination point for NAD(+).

It belongs to the isocitrate and isopropylmalate dehydrogenases family. LeuB type 1 subfamily. In terms of assembly, homodimer. Requires Mg(2+) as cofactor. It depends on Mn(2+) as a cofactor.

The protein resides in the cytoplasm. It carries out the reaction (2R,3S)-3-isopropylmalate + NAD(+) = 4-methyl-2-oxopentanoate + CO2 + NADH. It participates in amino-acid biosynthesis; L-leucine biosynthesis; L-leucine from 3-methyl-2-oxobutanoate: step 3/4. Its function is as follows. Catalyzes the oxidation of 3-carboxy-2-hydroxy-4-methylpentanoate (3-isopropylmalate) to 3-carboxy-4-methyl-2-oxopentanoate. The product decarboxylates to 4-methyl-2 oxopentanoate. The protein is 3-isopropylmalate dehydrogenase of Xanthomonas campestris pv. campestris (strain 8004).